The chain runs to 374 residues: uncharacterized protein (374 aa).

A coiled-coil region spans residues 39–66 (RDVRKHLESRDAKQELIDSLEEAVRDSR).

This is an uncharacterized protein from Mycobacterium tuberculosis (strain CDC 1551 / Oshkosh).